A 794-amino-acid polypeptide reads, in one-letter code: Zinc finger Y-chromosomal protein 1 (794 aa).

Residues 380 to 389 (TKQKLKKKRR) carry the Nuclear localization signal motif. 13 consecutive C2H2-type zinc fingers follow at residues 411-433 (YPCM…MKNH), 442-464 (YRCT…LESH), 477-499 (LECE…KLTH), 508-531 (HICK…LAVH), 537-559 (HICV…MRTH), 565-588 (YLCQ…KTKH), 594-616 (FKCD…AILH), 622-645 (HQCL…ISVH), 651-673 (HKCE…EAAH), 679-702 (HQCR…LSVH), 708-730 (YRCK…MKTH), 736-759 (YQCE…ISIH), and 765-788 (HRCD…LKHH).

Belongs to the krueppel C2H2-type zinc-finger protein family. ZFX/ZFY subfamily.

It is found in the nucleus. In terms of biological role, probable transcriptional activator. This is Zinc finger Y-chromosomal protein 1 (zfy1) from Xenopus laevis (African clawed frog).